A 489-amino-acid chain; its full sequence is NADH-ubiquinone oxidoreductase chain 2 (489 aa).

Transmembrane regions (helical) follow at residues 9 to 29 (LFPE…GVVF), 47 to 67 (LGLL…PLAV), 80 to 100 (FTYF…VMCL), 114 to 134 (IVLI…YDLI), 168 to 188 (FILG…IYGF), 216 to 236 (IFMG…AVPF), 248 to 268 (PTIV…ANML), 280 to 300 (WQQL…LAAM), 309 to 329 (LAYS…CGTI), 335 to 355 (LLIG…IVLA), 376 to 396 (ILAI…PLAG), 401 to 421 (FYLF…IGVV), and 459 to 479 (LAIT…LFLV).

Belongs to the complex I subunit 2 family.

It is found in the mitochondrion inner membrane. The enzyme catalyses a ubiquinone + NADH + 5 H(+)(in) = a ubiquinol + NAD(+) + 4 H(+)(out). Core subunit of the mitochondrial membrane respiratory chain NADH dehydrogenase (Complex I) that is believed to belong to the minimal assembly required for catalysis. Complex I functions in the transfer of electrons from NADH to the respiratory chain. The immediate electron acceptor for the enzyme is believed to be ubiquinone. The chain is NADH-ubiquinone oxidoreductase chain 2 (ND2) from Marchantia polymorpha (Common liverwort).